The primary structure comprises 308 residues: Aliphatic nitrilase (308 aa).

Residues 4–270 (FRAAVVQAAP…ETILTADLDT (267 aa)) form the CN hydrolase domain. Glu-44 serves as the catalytic Proton acceptor. Lys-130 is an active-site residue. Cys-164 acts as the Nucleophile in catalysis.

This sequence belongs to the carbon-nitrogen hydrolase superfamily. Nitrilase family.

The catalysed reaction is a nitrile + 2 H2O = a carboxylate + NH4(+). In terms of biological role, nitrilase that hydrolyzes preferentially phenylacetonitrile, but not (R,S)-mandelonitrile. Also acts on dinitriles like phenylenediacetonitriles (PDAs) 1,2-PDA, 1,3-PDA, and 1,4-PDA, and cyanophenyl acetonitriles (CPAs) 2-CPA and 4-CPA, but with lower activities. This is Aliphatic nitrilase (nit) from Sinorhizobium fredii (strain HH103).